Reading from the N-terminus, the 646-residue chain is UvrABC system protein C (646 aa).

Residues 16-95 (VEPGVYRFRD…IKEFDPRFNV (80 aa)) enclose the GIY-YIG domain. Residues 208 to 243 (DRFARALEQQMNAAAEQLDFERAARLRDDLSALKRA) form the UVR domain.

This sequence belongs to the UvrC family. In terms of assembly, interacts with UvrB in an incision complex.

It is found in the cytoplasm. Its function is as follows. The UvrABC repair system catalyzes the recognition and processing of DNA lesions. UvrC both incises the 5' and 3' sides of the lesion. The N-terminal half is responsible for the 3' incision and the C-terminal half is responsible for the 5' incision. In Mycobacterium bovis (strain BCG / Pasteur 1173P2), this protein is UvrABC system protein C.